A 394-amino-acid polypeptide reads, in one-letter code: Zinc finger and SCAN domain-containing protein 9 (394 aa).

Residue K26 forms a Glycyl lysine isopeptide (Lys-Gly) (interchain with G-Cter in SUMO2) linkage. In terms of domain architecture, SCAN box spans R52 to L134. Residues K215 and K238 each participate in a glycyl lysine isopeptide (Lys-Gly) (interchain with G-Cter in SUMO2) cross-link. 5 consecutive C2H2-type zinc fingers follow at residues H254–H276, Y282–H304, Y310–H332, Y338–H360, and H366–H388.

Belongs to the krueppel C2H2-type zinc-finger protein family.

It is found in the nucleus. In terms of biological role, may be involved in transcriptional regulation. This Homo sapiens (Human) protein is Zinc finger and SCAN domain-containing protein 9 (ZSCAN9).